Consider the following 79-residue polypeptide: Acyl carrier protein (79 aa).

Positions 3 to 78 constitute a Carrier domain; sequence QEILEKVRSI…DAVSYIQEKK (76 aa). At Ser-38 the chain carries O-(pantetheine 4'-phosphoryl)serine.

The protein belongs to the acyl carrier protein (ACP) family. 4'-phosphopantetheine is transferred from CoA to a specific serine of apo-ACP by AcpS. This modification is essential for activity because fatty acids are bound in thioester linkage to the sulfhydryl of the prosthetic group.

It is found in the cytoplasm. It participates in lipid metabolism; fatty acid biosynthesis. Functionally, carrier of the growing fatty acid chain in fatty acid biosynthesis. The protein is Acyl carrier protein of Synechococcus sp. (strain RCC307).